The sequence spans 477 residues: Lactate utilization protein B (477 aa).

4Fe-4S ferredoxin-type domains are found at residues 304–334 (GTQF…GHSY) and 353–382 (YDTY…LHDL). [4Fe-4S] cluster is bound by residues Cys-313, Cys-316, Cys-319, Cys-323, Cys-366, Cys-369, and Cys-373. Residues 443–463 (GPKPLQAWTNSRDFPMPDDEN) are disordered.

Belongs to the LutB/YkgF family.

Is involved in L-lactate degradation and allows cells to grow with lactate as the sole carbon source. Has probably a role as an electron transporter during oxidation of L-lactate. The protein is Lactate utilization protein B of Macrococcus caseolyticus (strain JCSC5402) (Macrococcoides caseolyticum).